The primary structure comprises 74 residues: RNA-binding protein Hfq (74 aa).

The 61-residue stretch at Asp9–Val69 folds into the Sm domain.

It belongs to the Hfq family. As to quaternary structure, homohexamer.

In terms of biological role, RNA chaperone that binds small regulatory RNA (sRNAs) and mRNAs to facilitate mRNA translational regulation in response to envelope stress, environmental stress and changes in metabolite concentrations. Also binds with high specificity to tRNAs. The polypeptide is RNA-binding protein Hfq (Anoxybacillus flavithermus (strain DSM 21510 / WK1)).